Consider the following 266-residue polypeptide: Small ribosomal subunit protein eS1 (266 aa).

The disordered stretch occupies residues 234–266; the sequence is EGGTGTATKATGDDTGAKVERADGYEPPIQETV. Positions 244-257 are enriched in basic and acidic residues; that stretch reads TGDDTGAKVERADG.

Belongs to the eukaryotic ribosomal protein eS1 family. Component of the small ribosomal subunit. Mature ribosomes consist of a small (40S) and a large (60S) subunit. The 40S subunit contains about 33 different proteins and 1 molecule of RNA (18S). The 60S subunit contains about 49 different proteins and 3 molecules of RNA (28S, 5.8S and 5S). Part of the small subunit (SSU) processome, composed of more than 70 proteins and the RNA chaperone small nucleolar RNA (snoRNA) U3.

The protein localises to the cytoplasm. It is found in the nucleus. The protein resides in the nucleolus. Component of the small ribosomal subunit. The ribosome is a large ribonucleoprotein complex responsible for the synthesis of proteins in the cell. Part of the small subunit (SSU) processome, first precursor of the small eukaryotic ribosomal subunit. During the assembly of the SSU processome in the nucleolus, many ribosome biogenesis factors, an RNA chaperone and ribosomal proteins associate with the nascent pre-rRNA and work in concert to generate RNA folding, modifications, rearrangements and cleavage as well as targeted degradation of pre-ribosomal RNA by the RNA exosome. May play a role during erythropoiesis. The chain is Small ribosomal subunit protein eS1 (rps3a) from Solea senegalensis (Senegalese sole).